The primary structure comprises 428 residues: Tyrosine--tRNA ligase (428 aa).

Tyr36 is an L-tyrosine binding site. The 'HIGH' region motif lies at 41–50 (PTAPSLHAGH). 2 residues coordinate L-tyrosine: Tyr171 and Gln175. The short motif at 231 to 235 (KFGKS) is the 'KMSKS' region element. Lys234 contacts ATP. One can recognise an S4 RNA-binding domain in the interval 359–416 (DSIVDLLVETGLAASKGAARRNVAEGGVYVNNIRIESDEWIPQHSDFLHERWLVLRRG).

The protein belongs to the class-I aminoacyl-tRNA synthetase family. TyrS type 1 subfamily. As to quaternary structure, homodimer.

Its subcellular location is the cytoplasm. It catalyses the reaction tRNA(Tyr) + L-tyrosine + ATP = L-tyrosyl-tRNA(Tyr) + AMP + diphosphate + H(+). Catalyzes the attachment of tyrosine to tRNA(Tyr) in a two-step reaction: tyrosine is first activated by ATP to form Tyr-AMP and then transferred to the acceptor end of tRNA(Tyr). The chain is Tyrosine--tRNA ligase from Mycolicibacterium fortuitum (Mycobacterium fortuitum).